Reading from the N-terminus, the 509-residue chain is Light-independent protochlorophyllide reductase subunit B (509 aa).

Asp36 serves as a coordination point for [4Fe-4S] cluster. Residue Asp295 is the Proton donor of the active site. Position 430-431 (430-431 (GM)) interacts with substrate.

The protein belongs to the ChlB/BchB/BchZ family. In terms of assembly, protochlorophyllide reductase is composed of three subunits; ChlL, ChlN and ChlB. Forms a heterotetramer of two ChlB and two ChlN subunits. It depends on [4Fe-4S] cluster as a cofactor.

Its subcellular location is the plastid. It is found in the chloroplast. It catalyses the reaction chlorophyllide a + oxidized 2[4Fe-4S]-[ferredoxin] + 2 ADP + 2 phosphate = protochlorophyllide a + reduced 2[4Fe-4S]-[ferredoxin] + 2 ATP + 2 H2O. Its pathway is porphyrin-containing compound metabolism; chlorophyll biosynthesis (light-independent). Component of the dark-operative protochlorophyllide reductase (DPOR) that uses Mg-ATP and reduced ferredoxin to reduce ring D of protochlorophyllide (Pchlide) to form chlorophyllide a (Chlide). This reaction is light-independent. The NB-protein (ChlN-ChlB) is the catalytic component of the complex. The polypeptide is Light-independent protochlorophyllide reductase subunit B (Mesostigma viride (Green alga)).